The primary structure comprises 78 residues: Consomatin Nc1 (78 aa).

The signal sequence occupies residues 1–22; it reads MQTAYWVMVMVMVWITAPLSEG. A propeptide spanning residues 23 to 59 is cleaved from the precursor; the sequence is GKPNDVIRGLVPDDLTPQLILRSLISRRRSDKDVGKR. Glu61 is subject to 4-carboxyglutamate. Residues Cys62 and Cys67 are joined by a disulfide bond. Trp64 is subject to D-tryptophan. 4-hydroxyproline is present on Pro70. A propeptide spanning residues 71 to 78 is cleaved from the precursor; sequence LSRRHDLG.

It belongs to the conotoxin C superfamily. Consomatin family. As to expression, expressed by the venom duct.

It localises to the secreted. Moderately activates human somatostatin receptors (SSTR) with a preferential activation of SSTR1 and SSTR4. In vivo, does not cause behavioral changes in mice within a few minutes of intracranial injection, but causes a progressive loss of movement thereafter. Four to five hours after injection, mice recover, even with the highest dose tested. Shows antinociception and antihyperalgesia activities in two mouse models of acute pain, most probably by acting outside the central nervous system. The polypeptide is Consomatin Nc1 (Conus neocostatus (Cone snail)).